The following is a 322-amino-acid chain: Arginase (322 aa).

Mn(2+) is bound by residues His113, Asp141, His143, and Asp145. Substrate-binding positions include 143–147 (HADIN), 154–156 (SGN), and Asp200. Positions 247 and 249 each coordinate Mn(2+). Positions 261 and 292 each coordinate substrate.

Belongs to the arginase family. In terms of assembly, homotrimer. The cofactor is Mn(2+).

It carries out the reaction L-arginine + H2O = urea + L-ornithine. Its pathway is nitrogen metabolism; urea cycle; L-ornithine and urea from L-arginine: step 1/1. This Coccidioides posadasii (strain C735) (Valley fever fungus) protein is Arginase (ARG).